A 161-amino-acid chain; its full sequence is RuBisCO chaperone RbcX (161 aa).

Disordered stretches follow at residues 1–20 and 130–161; these read MQFM…KPME and LGAE…SHAD. Polar residues predominate over residues 147 to 161; that stretch reads DSATPDDASNASHAD.

Belongs to the RbcX family. Homodimer. Interacts with the exposed C-terminal peptide of endogenous RbcL ('Lys-460-Asp-470') via its central cleft, as well as C-terminal peptides from other cyanobacterial RbcL. Contacts a second RbcL monomer via its peripheral polar surface.

The protein localises to the carboxysome. Its subcellular location is the cytoplasm. In terms of biological role, an RbcL-specific chaperone. The central cleft of the RbcX homodimer (RbcX2) binds the C-terminus of an RbcL monomer, stabilizing the C-terminus and probably preventing its reassociation with chaperonin GroEL-ES. At the same time the peripheral region of RbcX2 binds a second RbcL monomer, bridging the RbcL homodimers in the correct orientation. The RbcX2(2)-bound RbcL dimers then assemble into the RbcL8 core (RbcL8-(RbcX2)8). RbcS binding triggers the release of RbcX2. The chain is RuBisCO chaperone RbcX from Synechococcus sp. (strain ATCC 27144 / PCC 6301 / SAUG 1402/1) (Anacystis nidulans).